Here is a 1074-residue protein sequence, read N- to C-terminus: Transmembrane protein 132E (1074 aa).

An N-terminal signal peptide occupies residues 1 to 25; that stretch reads MAPGMSGRGGAALLCLSALLAHASG. Residues 26 to 893 are Extracellular-facing; the sequence is RSHPASPSPP…LTDLEIGMYA (868 aa). N-linked (GlcNAc...) asparagine glycans are attached at residues N70 and N91. 2 disordered regions span residues 202 to 226 and 241 to 264; these read PPAP…ATGE and ASGG…ESPT. Over residues 243-256 the composition is skewed to gly residues; the sequence is GGCGGSRRGAGPGV. N-linked (GlcNAc...) asparagine glycans are attached at residues N318 and N399. 2 disordered regions span residues 563 to 585 and 814 to 867; these read RSVR…ASRG and GRDE…VPPT. Positions 841 to 862 are enriched in low complexity; the sequence is GAGPPGSALPAPEAPGPGTASP. Residues 894-914 traverse the membrane as a helical segment; the sequence is LLGVFCLAILVFLINCIVFVL. The Cytoplasmic segment spans residues 915–1074; the sequence is RYRHKRIPPE…NYMRRIKEIA (160 aa). Residues 946 to 1063 form a disordered region; the sequence is VQGELSPPAG…PTRPTAPPDL (118 aa). The segment covering 972–984 has biased composition (low complexity); it reads SGSSQTSVQSQVH. Positions 1034-1044 are enriched in acidic residues; the sequence is GEEDEEEEEDL.

Belongs to the TMEM132 family.

The protein resides in the membrane. Its function is as follows. Required for normal inner ear hair cell function and hearing. This chain is Transmembrane protein 132E, found in Homo sapiens (Human).